The following is a 303-amino-acid chain: Cytosolic Fe-S cluster assembly factor CFD1 (303 aa).

Position 15–22 (15–22) interacts with ATP; sequence GKGGVGKS. 2 residues coordinate [4Fe-4S] cluster: C199 and C202.

Belongs to the Mrp/NBP35 ATP-binding proteins family. NUBP2/CFD1 subfamily. As to quaternary structure, heterotetramer of 2 NBP35 and 2 CFD1 chains. [4Fe-4S] cluster serves as cofactor.

It localises to the cytoplasm. Component of the cytosolic iron-sulfur (Fe/S) protein assembly (CIA) machinery. Required for maturation of extramitochondrial Fe-S proteins. The NBP35-CFD1 heterotetramer forms a Fe-S scaffold complex, mediating the de novo assembly of an Fe-S cluster and its transfer to target apoproteins. This Chaetomium globosum (strain ATCC 6205 / CBS 148.51 / DSM 1962 / NBRC 6347 / NRRL 1970) (Soil fungus) protein is Cytosolic Fe-S cluster assembly factor CFD1.